The following is a 35-amino-acid chain: uncharacterized protein (35 aa).

This is an uncharacterized protein from Archaeoglobus fulgidus (strain ATCC 49558 / DSM 4304 / JCM 9628 / NBRC 100126 / VC-16).